A 265-amino-acid chain; its full sequence is Probable enoyl-CoA hydratase 1, peroxisomal (265 aa).

Met-1 bears the N-acetylmethionine mark. Substrate-binding positions include 68–72 and Ala-112; that span reads SGVDL. Residues 263–265 carry the Microbody targeting signal motif; the sequence is SKL.

This sequence belongs to the enoyl-CoA hydratase/isomerase family.

It is found in the peroxisome. It catalyses the reaction a (3S)-3-hydroxyacyl-CoA = a (2E)-enoyl-CoA + H2O. It carries out the reaction a 4-saturated-(3S)-3-hydroxyacyl-CoA = a (3E)-enoyl-CoA + H2O. Its pathway is lipid metabolism; fatty acid beta-oxidation. In terms of biological role, straight-chain enoyl-CoA thioesters from C4 up to at least C16 are processed, although with decreasing catalytic rate. This chain is Probable enoyl-CoA hydratase 1, peroxisomal, found in Arabidopsis thaliana (Mouse-ear cress).